The sequence spans 240 residues: LexA repressor (240 aa).

The H-T-H motif DNA-binding region spans 26 to 46 (FDEMKDALDLKSKSGIHRLIT). Residues S161 and K199 each act as for autocatalytic cleavage activity in the active site.

Belongs to the peptidase S24 family. In terms of assembly, homodimer.

It carries out the reaction Hydrolysis of Ala-|-Gly bond in repressor LexA.. Functionally, represses a number of genes involved in the response to DNA damage (SOS response), including recA and lexA. In the presence of single-stranded DNA, RecA interacts with LexA causing an autocatalytic cleavage which disrupts the DNA-binding part of LexA, leading to derepression of the SOS regulon and eventually DNA repair. The protein is LexA repressor of Methylobacterium nodulans (strain LMG 21967 / CNCM I-2342 / ORS 2060).